The primary structure comprises 887 residues: 3-hydroxy-3-methylglutaryl-coenzyme A reductase (887 aa).

Topologically, residues 1 to 9 (MLSRLFRMH) are cytoplasmic. A helical membrane pass occupies residues 10–39 (GLFVASHPWEVIVGTVTLTICMMSMNMFTG). At 40 to 56 (NNKICGWNYECPKFEED) the chain is on the lumenal side. The chain crosses the membrane as a helical span at residues 57 to 78 (VLSSDIIILTITRCIAILYIYF). One can recognise an SSD domain in the interval 61 to 218 (DIIILTITRC…MTFFPACVSL (158 aa)). The short motif at 75–78 (YIYF) is the INSIG-binding motif element. Topologically, residues 79-89 (QFQNLRQLGSK) are cytoplasmic. Lys-89 is covalently cross-linked (Glycyl lysine isopeptide (Lys-Gly) (interchain with G-Cter in ubiquitin)). Residues 90-114 (YILGIAGLFTIFSSFVFSTVVIHFL) traverse the membrane as a helical segment. The Lumenal segment spans residues 115–123 (DKELTGLNE). Residues 124–149 (ALPFFLLLIDLSRASALAKFALSSNS) traverse the membrane as a helical segment. At 150 to 159 (QDEVRENIAR) the chain is on the cytoplasmic side. The helical transmembrane segment at 160 to 187 (GMAILGPTFTLDALVECLVIGVGTMSGV) threads the bilayer. Topologically, residues 188–191 (RQLE) are lumenal. Residues 192–220 (IMCCFGCMSVLANYFVFMTFFPACVSLVL) form a helical membrane-spanning segment. Over 221 to 248 (ELSRESREGRPIWQLSHFARVLEEEENK) the chain is Cytoplasmic. Residue Lys-248 forms a Glycyl lysine isopeptide (Lys-Gly) (interchain with G-Cter in ubiquitin) linkage. Residues 249–275 (PNPVTQRVKMIMSLGLVLVHAHSRWIA) traverse the membrane as a helical segment. Topologically, residues 276 to 314 (DPSPQNSTAEQSKVSLGLAEDVSKRIEPSVSLWQFYLSK) are lumenal. An N-linked (GlcNAc...) asparagine glycan is attached at Asn-281. The helical transmembrane segment at 315–339 (MISMDIEQVITLSLALLLAVKYIFF) threads the bilayer. Topologically, residues 340–887 (EQAETESTLS…LQGTCTKKAA (548 aa)) are cytoplasmic. Catalysis depends on charge relay system residues Glu-558, Lys-690, and Asp-766. The Proton donor role is filled by His-865. Ser-871 is modified (phosphoserine; by AMPK).

This sequence belongs to the HMG-CoA reductase family. Homotetramer. Homodimer. Interacts (via its SSD) with INSIG1; the interaction, accelerated by sterols, leads to the recruitment of HMGCR to AMFR/gp78 for its ubiquitination by the sterol-mediated ERAD pathway. Interacts with UBIAD1. In terms of processing, undergoes sterol-mediated ubiquitination and ER-associated degradation (ERAD). Accumulation of sterols in the endoplasmic reticulum (ER) membrane, triggers binding of the reductase to the ER membrane protein INSIG1 or INSIG2. The INSIG1 binding leads to the recruitment of the ubiquitin ligase, AMFR/gp78, RNF139 or RNF145, initiating ubiquitination of the reductase. The ubiquitinated reductase is then extracted from the ER membrane and delivered to cytosolic 26S proteosomes by a mechanism probably mediated by the ATPase Valosin-containing protein VCP/p97. The INSIG2-binding leads to the recruitment of the ubiquitin ligase RNF139, initiating ubiquitination of the reductase. Lys-248 is the main site of ubiquitination. Ubiquitination is enhanced by the presence of a geranylgeranylated protein. Post-translationally, N-glycosylated. Deglycosylated by NGLY1 on release from the endoplasmic reticulum (ER) in a sterol-mediated manner. Phosphorylated. Phosphorylation at Ser-871 reduces the catalytic activity.

The protein resides in the endoplasmic reticulum membrane. Its subcellular location is the peroxisome membrane. The catalysed reaction is (R)-mevalonate + 2 NADP(+) + CoA = (3S)-3-hydroxy-3-methylglutaryl-CoA + 2 NADPH + 2 H(+). It functions in the pathway metabolic intermediate biosynthesis; (R)-mevalonate biosynthesis; (R)-mevalonate from acetyl-CoA: step 3/3. With respect to regulation, regulated by a negative feedback mechanism through sterols and non-sterol metabolites derived from mevalonate. Phosphorylation at Ser-871 down-regulates the catalytic activity. Its function is as follows. Catalyzes the conversion of (3S)-hydroxy-3-methylglutaryl-CoA (HMG-CoA) to mevalonic acid, the rate-limiting step in the synthesis of cholesterol and other isoprenoids, thus plays a critical role in cellular cholesterol homeostasis. This chain is 3-hydroxy-3-methylglutaryl-coenzyme A reductase (Hmgcr), found in Rattus norvegicus (Rat).